The primary structure comprises 499 residues: 2-isopropylmalate synthase (499 aa).

The region spanning 5 to 267 (IKIFDTTLRD…ETGINLGEIA (263 aa)) is the Pyruvate carboxyltransferase domain. Mn(2+) is bound by residues D14, H202, H204, and N238. Residues 391-499 (SVEVLHVISG…YLSALNRIRR (109 aa)) form a regulatory domain region.

Belongs to the alpha-IPM synthase/homocitrate synthase family. LeuA type 1 subfamily. It depends on Mn(2+) as a cofactor.

Its subcellular location is the cytoplasm. It carries out the reaction 3-methyl-2-oxobutanoate + acetyl-CoA + H2O = (2S)-2-isopropylmalate + CoA + H(+). The protein operates within amino-acid biosynthesis; L-leucine biosynthesis; L-leucine from 3-methyl-2-oxobutanoate: step 1/4. Functionally, catalyzes the condensation of the acetyl group of acetyl-CoA with 3-methyl-2-oxobutanoate (2-ketoisovalerate) to form 3-carboxy-3-hydroxy-4-methylpentanoate (2-isopropylmalate). This is 2-isopropylmalate synthase from Pyrococcus furiosus (strain ATCC 43587 / DSM 3638 / JCM 8422 / Vc1).